We begin with the raw amino-acid sequence, 242 residues long: Protein CDV3 homolog B (242 aa).

Positions 1 to 15 (MAEPEERSLDDFFAK) are enriched in basic and acidic residues. Positions 1–242 (MAEPEERSLD…DNQYAVLGEQ (242 aa)) are disordered. Position 2 is an N-acetylalanine (A2). Over residues 30 to 57 (AAGSRGPARPSDGATSSSLSSYVSAAGK) the composition is skewed to low complexity. The segment covering 59 to 75 (VKKEKSGKSENPDQLQE) has biased composition (basic and acidic residues). The segment covering 105 to 122 (KEDDENENKEEQGADWEE) has biased composition (acidic residues). Polar residues-rich tracts occupy residues 129–143 (DKSS…QAQA) and 183–194 (SDTQFPSPQATA). Over residues 195-213 (KHTESRREKEMEKTFEIVK) the composition is skewed to basic and acidic residues.

The protein belongs to the CDV3 family.

It localises to the cytoplasm. In Xenopus laevis (African clawed frog), this protein is Protein CDV3 homolog B (cdv3-b).